Reading from the N-terminus, the 348-residue chain is Peptidyl-Lys metalloendopeptidase (348 aa).

The signal sequence occupies residues 1–18; it reads MFSSVMVALVSLAVAVSA. Residues 19–181 constitute a propeptide that is removed on maturation; it reads NPGLSLKVSG…RATPTLTRPV (163 aa). 2 cysteine pairs are disulfide-bonded: cysteine 186–cysteine 256 and cysteine 258–cysteine 278. An O-linked (Man) threonine; partial glycan is attached at threonine 223. Zn(2+) is bound at residue histidine 298. The active site involves glutamate 299. 2 residues coordinate Zn(2+): histidine 302 and aspartate 311.

It depends on Zn(2+) as a cofactor.

Its subcellular location is the secreted. The catalysed reaction is Preferential cleavage in proteins: -Xaa-|-Lys- (in which Xaa may be Pro).. Its activity is regulated as follows. Inhibited by chelating agents such as EDTA and 1,10-phenanthroline. In Grifola frondosa (Maitake), this protein is Peptidyl-Lys metalloendopeptidase (MEP).